Consider the following 144-residue polypeptide: MLLNTLSPAAGSKHAPKRLGRGVGSGLGKTGGRGHKGQKSRSGGKVRPGFEGGQMPLKQRLPKFGFTSRKSFVSAEVRLSELAKVTGDVVDLNALKAANLVTKNIEFAKIVLSGEINKAVTVKGLRVTKGAKAAIEAAGGKIEE.

The interval 1 to 57 (MLLNTLSPAAGSKHAPKRLGRGVGSGLGKTGGRGHKGQKSRSGGKVRPGFEGGQMPL) is disordered. Gly residues predominate over residues 21–31 (RGVGSGLGKTG). Residues 32 to 44 (GRGHKGQKSRSGG) show a composition bias toward basic residues.

The protein belongs to the universal ribosomal protein uL15 family. As to quaternary structure, part of the 50S ribosomal subunit.

Its function is as follows. Binds to the 23S rRNA. This Vibrio cholerae serotype O1 (strain ATCC 39315 / El Tor Inaba N16961) protein is Large ribosomal subunit protein uL15.